The sequence spans 419 residues: Dual specificity protein phosphatase 7 (419 aa).

A disordered region spans residues 1–41 (MKNQLRGPPVRAHMSTSGAAAAGGTRAGSEPGAGSGSSAGI). The span at 15–30 (STSGAAAAGGTRAGSE) shows a compositional bias: low complexity. A compositionally biased stretch (gly residues) spans 31-41 (PGAGSGSSAGI). One can recognise a Rhodanese domain in the interval 68–187 (GGASLLLLDC…FQTEYSEHCE (120 aa)). The tract at residues 216–240 (CSDGESDRELPSSATESDGSPVPSS) is disordered. Polar residues predominate over residues 227 to 240 (SSATESDGSPVPSS). A Tyrosine-protein phosphatase domain is found at 244–387 (FPVQILPYLY…LLDFERTLGL (144 aa)). Residue Cys331 is the Phosphocysteine intermediate of the active site. Residue 331-337 (CLAGISR) participates in substrate binding.

The protein belongs to the protein-tyrosine phosphatase family. Non-receptor class dual specificity subfamily. Interacts with MAPK1/ERK2; the interaction enhances DUSP7 phosphatase activity.

The protein resides in the cytoplasm. It carries out the reaction O-phospho-L-tyrosyl-[protein] + H2O = L-tyrosyl-[protein] + phosphate. It catalyses the reaction O-phospho-L-seryl-[protein] + H2O = L-seryl-[protein] + phosphate. The enzyme catalyses O-phospho-L-threonyl-[protein] + H2O = L-threonyl-[protein] + phosphate. Strongly inhibited by sodium orthovanadate. Dual specificity protein phosphatase. Shows high activity towards MAPK1/ERK2. Also has lower activity towards MAPK14 and MAPK8. In arrested oocytes, plays a role in meiotic resumption. Promotes nuclear envelope breakdown and activation of the CDK1/Cyclin-B complex in oocytes, probably by dephosphorylating and inactivating the conventional protein kinase C (cPKC) isozyme PRKCB. May also inactivate PRKCA and/or PRKCG. Also important in oocytes for normal chromosome alignment on the metaphase plate and progression to anaphase, where it might regulate activity of the spindle-assembly checkpoint (SAC) complex. This chain is Dual specificity protein phosphatase 7, found in Rattus norvegicus (Rat).